The sequence spans 803 residues: Xylosyltransferase sqv-6 (803 aa).

Over 3 to 13 (VVGGVNTNYRH) the chain is Cytoplasmic. A helical; Signal-anchor for type II membrane protein membrane pass occupies residues 14–34 (YALVIVLFFFLNVYLLYSAQN). Residues 35 to 803 (SVQIRKDEGE…GWDEEARILR (769 aa)) are Lumenal-facing. A disulfide bond links Cys63 and Cys91. Residues Asn95, Asn175, and Asn224 are each glycosylated (N-linked (GlcNAc...) asparagine). 3 disulfide bridges follow: Cys107-Cys446, Cys465-Cys479, and Cys467-Cys477. In terms of domain architecture, WSC spans 115–209 (IDQRIGCFLD…FNAVEIFRTD (95 aa)). Residues Asp265 and 294-296 (TIW) contribute to the UDP-alpha-D-xylose site. N-linked (GlcNAc...) asparagine glycosylation occurs at Asn326. 399 to 400 (DW) is a UDP-alpha-D-xylose binding site. Residues Ser480 and 506-507 (RK) each bind UDP-alpha-D-xylose. Asn615 and Asn718 each carry an N-linked (GlcNAc...) asparagine glycan. A disulfide bridge connects residues Cys769 and Cys775.

Belongs to the glycosyltransferase 14 family. XylT subfamily. A divalent metal cation is required as a cofactor.

Its subcellular location is the endoplasmic reticulum membrane. It is found in the golgi apparatus membrane. It catalyses the reaction UDP-alpha-D-xylose + L-seryl-[protein] = 3-O-(beta-D-xylosyl)-L-seryl-[protein] + UDP + H(+). The protein operates within glycan metabolism; chondroitin sulfate biosynthesis. It functions in the pathway glycan metabolism; heparan sulfate biosynthesis. Catalyzes the first step in biosynthesis of glycosaminoglycan. Transfers D-xylose from UDP-D-xylose to specific serine residues of the core protein. This is Xylosyltransferase sqv-6 from Caenorhabditis briggsae.